We begin with the raw amino-acid sequence, 243 residues long: MGRRILGQRRGRGTSTFRAPSHRYKADLSHRNVEESDLVTGEVVDIEHDPARSAPLADVQFDDGDRRLVLAPEGVTVGDEIQIGVSAEIAPGNTMPLAEIPEGVPVCNVERQPGDGGKFARASGVSATLLTHDRNAAVVQLPSGEMRRLSPECRATIGVVAGGGRTEKPFVKAGNKHHKMKSRGGKWPRVRGVAMNAVDHPFGGGGRQHPGKPKSVSRDTPPGRKVGDIASKRTGRGGKGGQE.

Residues 198–243 (VDHPFGGGGRQHPGKPKSVSRDTPPGRKVGDIASKRTGRGGKGGQE) form a disordered region. Residues 221 to 231 (PPGRKVGDIAS) show a composition bias toward basic and acidic residues.

The protein belongs to the universal ribosomal protein uL2 family. As to quaternary structure, part of the 50S ribosomal subunit. Forms a bridge to the 30S subunit in the 70S ribosome.

Its function is as follows. One of the primary rRNA binding proteins. Required for association of the 30S and 50S subunits to form the 70S ribosome, for tRNA binding and peptide bond formation. It has been suggested to have peptidyltransferase activity; this is somewhat controversial. Makes several contacts with the 16S rRNA in the 70S ribosome. The polypeptide is Large ribosomal subunit protein uL2 (Natronomonas pharaonis (strain ATCC 35678 / DSM 2160 / CIP 103997 / JCM 8858 / NBRC 14720 / NCIMB 2260 / Gabara) (Halobacterium pharaonis)).